A 213-amino-acid chain; its full sequence is Sclerostin (213 aa).

Positions 1–28 are cleaved as a signal peptide; it reads MQLSLAPCLACLLVHAAFVAVESQGWQA. Asn53 is a glycosylation site (N-linked (GlcNAc...) asparagine). 4 disulfide bridges follow: Cys80-Cys134, Cys94-Cys148, Cys105-Cys165, and Cys109-Cys167. Residues 82–172 enclose the CTCK domain; the sequence is ELHYTRFVTD…ASCKCKRLTR (91 aa). Asn175 carries an N-linked (GlcNAc...) asparagine glycan. The tract at residues 178–213 is disordered; that stretch reads ELKDFGPETARPQKGRKPRPRARGAKANQAELENAY. Residues 190 to 201 show a composition bias toward basic residues; it reads QKGRKPRPRARG.

It belongs to the sclerostin family. In terms of assembly, interacts with LRP4 (via the extracellular domain); the interaction facilitates the inhibition of Wnt signaling. Interacts with LRP5 (via the first two YWTD-EGF repeat domains); the interaction inhibits Wnt-mediated signaling. Interacts with LRP6.

The protein localises to the secreted. In terms of biological role, negative regulator of bone growth that acts through inhibition of Wnt signaling and bone formation. In Rattus norvegicus (Rat), this protein is Sclerostin.